We begin with the raw amino-acid sequence, 685 residues long: Diphthine--ammonia ligase (685 aa).

It in the C-terminal section; belongs to the RutC family. This sequence in the N-terminal section; belongs to the Diphthine--ammonia ligase family. Interacts with elongation factor 2 (eEF-2; EFT1 or EFT2).

It localises to the cytoplasm. It catalyses the reaction diphthine-[translation elongation factor 2] + NH4(+) + ATP = diphthamide-[translation elongation factor 2] + AMP + diphosphate + H(+). Its pathway is protein modification; peptidyl-diphthamide biosynthesis. Its function is as follows. Amidase that catalyzes the last step of diphthamide biosynthesis using ammonium and ATP. Diphthamide biosynthesis consists in the conversion of an L-histidine residue in the translation elongation factor eEF-2 (EFT1 or EFT2) to diphthamide. The polypeptide is Diphthine--ammonia ligase (DPH6) (Saccharomyces cerevisiae (strain ATCC 204508 / S288c) (Baker's yeast)).